The primary structure comprises 468 residues: Zinc finger CCCH domain-containing protein 32 (468 aa).

A disordered region spans residues 1–25; that stretch reads MYARNPPLNGSQSAQAPDWTPADAD. C3H1-type zinc fingers lie at residues 45-73, 90-118, 136-164, 289-317, and 335-363; these read RPGA…HPRD, RFGE…HPKN, REGD…HPQP, RPGE…HPRD, and RPGV…HPMG.

Its subcellular location is the nucleus. This chain is Zinc finger CCCH domain-containing protein 32, found in Arabidopsis thaliana (Mouse-ear cress).